The following is a 522-amino-acid chain: Peptide methionine sulfoxide reductase MsrA/MsrB (522 aa).

A Thioredoxin domain is found at 17–174; it reads LALGACSPKI…ALALIRDPNA (158 aa). An intrachain disulfide couples cysteine 68 to cysteine 71. The segment at 199 to 354 is peptide methionine sulfoxide reductase A; it reads RTIYLAGGCF…PNGYCHIDIR (156 aa). The active site involves cysteine 207. The 124-residue stretch at 383 to 506 folds into the MsrB domain; it reads DAELKRTLTE…NGASLKFIPL (124 aa). A disulfide bridge connects residues cysteine 440 and cysteine 495. Cysteine 495 acts as the Nucleophile in catalysis.

This sequence in the N-terminal section; belongs to the thioredoxin family. The protein in the central section; belongs to the MsrA Met sulfoxide reductase family. In the C-terminal section; belongs to the MsrB Met sulfoxide reductase family.

It carries out the reaction L-methionyl-[protein] + [thioredoxin]-disulfide + H2O = L-methionyl-(S)-S-oxide-[protein] + [thioredoxin]-dithiol. The enzyme catalyses [thioredoxin]-disulfide + L-methionine + H2O = L-methionine (S)-S-oxide + [thioredoxin]-dithiol. The catalysed reaction is L-methionyl-[protein] + [thioredoxin]-disulfide + H2O = L-methionyl-(R)-S-oxide-[protein] + [thioredoxin]-dithiol. Has an important function as a repair enzyme for proteins that have been inactivated by oxidation. Catalyzes the reversible oxidation-reduction of methionine sulfoxide in proteins to methionine. The protein is Peptide methionine sulfoxide reductase MsrA/MsrB (msrAB) of Neisseria meningitidis serogroup B (strain ATCC BAA-335 / MC58).